The following is a 332-amino-acid chain: MSFSERLLAAWYRGHPALALLRPLEALYRRVVNARRADFLSGRKPAYRAPVPVVVVGNITVGGTGKTPMILWMVEHCRARGLRVGVISRGYGARPPHAPWRVRPEQDAAQAGDEPLMIVRRSGVPLMIDPDRPRALRALLAEEPLDLVLCDDGLQHYRLARDLELVLIDAARGLGNGRCLPAGPLREPRERLESVDALLYNGADEDPEDGFAFRLRPAALVNLQSGERRALGYFPAGQMLHAVAGIGNPQRFFGTLEALHWRPIPHAFPDHATYSATELTFDPPLPLLMTEKDAVKCRAFAAADWWYLAVDAVPSPAFVAWFDARLEHLLAR.

60-67 (TVGGTGKT) is an ATP binding site.

This sequence belongs to the LpxK family.

The catalysed reaction is a lipid A disaccharide + ATP = a lipid IVA + ADP + H(+). The protein operates within glycolipid biosynthesis; lipid IV(A) biosynthesis; lipid IV(A) from (3R)-3-hydroxytetradecanoyl-[acyl-carrier-protein] and UDP-N-acetyl-alpha-D-glucosamine: step 6/6. In terms of biological role, transfers the gamma-phosphate of ATP to the 4'-position of a tetraacyldisaccharide 1-phosphate intermediate (termed DS-1-P) to form tetraacyldisaccharide 1,4'-bis-phosphate (lipid IVA). The protein is Tetraacyldisaccharide 4'-kinase of Pseudomonas paraeruginosa (strain DSM 24068 / PA7) (Pseudomonas aeruginosa (strain PA7)).